The primary structure comprises 398 residues: Autophagy-related protein 39 (398 aa).

Positions 8 to 11 (WNLV) match the ATG8-binding motif. A disordered region spans residues 15–50 (RLRKGREGEEQSSKSEISLDSLHESSFAGEDDEDFD). The short motif at 52–59 (DVLSNTSS) is the ATG11-binding element. Residues 148-164 (VIMLSSLLSMTFSYLAL) traverse the membrane as a helical segment.

In terms of assembly, interacts with ATG8 and ATG11.

It is found in the endoplasmic reticulum membrane. Its subcellular location is the preautophagosomal structure membrane. In terms of biological role, acts as a receptor for reticulophagy and nucleophagy. Directs autophagic sequestration of double-membrane vesicles derived from the nuclear envelope and perinuclear endoplasmic reticulum (pnER) into autophagosomes. Is not required for the cytoplasm-to-vacuole targeting pathway, mitophagy, pexophagy, and non-selective autophagy. This chain is Autophagy-related protein 39, found in Saccharomyces cerevisiae (strain ATCC 204508 / S288c) (Baker's yeast).